The following is a 61-amino-acid chain: Small ribosomal subunit protein uS14 (61 aa).

Residues Cys24, Cys27, Cys40, and Cys43 each coordinate Zn(2+).

Belongs to the universal ribosomal protein uS14 family. Zinc-binding uS14 subfamily. In terms of assembly, part of the 30S ribosomal subunit. Contacts proteins S3 and S10. Zn(2+) serves as cofactor.

In terms of biological role, binds 16S rRNA, required for the assembly of 30S particles and may also be responsible for determining the conformation of the 16S rRNA at the A site. The polypeptide is Small ribosomal subunit protein uS14 (Thermosipho melanesiensis (strain DSM 12029 / CIP 104789 / BI429)).